Here is a 141-residue protein sequence, read N- to C-terminus: Large ribosomal subunit protein uL11 (141 aa).

The protein belongs to the universal ribosomal protein uL11 family. In terms of assembly, part of the ribosomal stalk of the 50S ribosomal subunit. Interacts with L10 and the large rRNA to form the base of the stalk. L10 forms an elongated spine to which L12 dimers bind in a sequential fashion forming a multimeric L10(L12)X complex. One or more lysine residues are methylated.

In terms of biological role, forms part of the ribosomal stalk which helps the ribosome interact with GTP-bound translation factors. The sequence is that of Large ribosomal subunit protein uL11 from Chlamydia caviae (strain ATCC VR-813 / DSM 19441 / 03DC25 / GPIC) (Chlamydophila caviae).